A 651-amino-acid polypeptide reads, in one-letter code: Chaperone protein HtpG (651 aa).

An a; substrate-binding region spans residues 1–353; that stretch reads MAPHVEQLEF…AQDMSLNVSR (353 aa). Positions 354-569 are b; the sequence is EILQQDRQIR…TFGITPALAR (216 aa). The c stretch occupies residues 570-651; the sequence is MYRASGQPVP…RLTRMVGEQS (82 aa).

Belongs to the heat shock protein 90 family. In terms of assembly, homodimer.

It localises to the cytoplasm. Molecular chaperone. Has ATPase activity. The polypeptide is Chaperone protein HtpG (Mycolicibacterium gilvum (strain PYR-GCK) (Mycobacterium gilvum (strain PYR-GCK))).